The following is a 100-amino-acid chain: Large ribosomal subunit protein uL23 (100 aa).

Belongs to the universal ribosomal protein uL23 family. In terms of assembly, part of the 50S ribosomal subunit. Contacts protein L29, and trigger factor when it is bound to the ribosome.

In terms of biological role, one of the early assembly proteins it binds 23S rRNA. One of the proteins that surrounds the polypeptide exit tunnel on the outside of the ribosome. Forms the main docking site for trigger factor binding to the ribosome. The chain is Large ribosomal subunit protein uL23 from Thermotoga maritima (strain ATCC 43589 / DSM 3109 / JCM 10099 / NBRC 100826 / MSB8).